Here is a 465-residue protein sequence, read N- to C-terminus: MAFNDDNFMLKNEAAKRLYQQIKDQPIFDYHCHLDPKEIFEDKVYDNIVDLWLGGDHYKWRLMRANGISEEEITGSASKLDKFKAFARTLQRSYGNPVYHWSVMELKNVFGVCELLTEDNAEEIYHRINAYLVEHQISPRKLIADSLVRFIGTTDHPLDDLAWHKRLAADDTFETVVAPTFRPDEAFIEHQCFADFVARLAQATGRTITDFKSFIAAMEERIAYFAENGCKASDISFTEIVFEAAEPEQLDHLMTRVLEGYQPQPLEIKQWQTAVFAELCRVYKHYGFVTQVHFGALRNNHSAIFNKLGADVGVDSLGDQAALAINMNRLLDHLVQRDSLPKMIWYNLNPSYNITVANTLANFQANENGIAGYLQFGAGWWFADTKLGMISQMNALAEQGLLANFVGMLTDSRSFLSYQRHDYFRRILSTYLGEWIEEGEVPEDYQALGSMAKDIAYNNAIQYFS.

Belongs to the metallo-dependent hydrolases superfamily. Uronate isomerase family.

It carries out the reaction D-glucuronate = D-fructuronate. It catalyses the reaction aldehydo-D-galacturonate = keto-D-tagaturonate. The protein operates within carbohydrate metabolism; pentose and glucuronate interconversion. The chain is Uronate isomerase from Streptococcus equi subsp. zooepidemicus (strain H70).